The sequence spans 122 residues: Ribonuclease P protein component (122 aa).

The protein belongs to the RnpA family. In terms of assembly, consists of a catalytic RNA component (M1 or rnpB) and a protein subunit.

It catalyses the reaction Endonucleolytic cleavage of RNA, removing 5'-extranucleotides from tRNA precursor.. Functionally, RNaseP catalyzes the removal of the 5'-leader sequence from pre-tRNA to produce the mature 5'-terminus. It can also cleave other RNA substrates such as 4.5S RNA. The protein component plays an auxiliary but essential role in vivo by binding to the 5'-leader sequence and broadening the substrate specificity of the ribozyme. In Lactobacillus helveticus (strain DPC 4571), this protein is Ribonuclease P protein component.